Consider the following 309-residue polypeptide: Sulfate adenylyltransferase subunit 2 (309 aa).

This sequence belongs to the PAPS reductase family. CysD subfamily. Heterodimer composed of CysD, the smaller subunit, and CysN.

It catalyses the reaction sulfate + ATP + H(+) = adenosine 5'-phosphosulfate + diphosphate. Its pathway is sulfur metabolism; hydrogen sulfide biosynthesis; sulfite from sulfate: step 1/3. In terms of biological role, with CysN forms the ATP sulfurylase (ATPS) that catalyzes the adenylation of sulfate producing adenosine 5'-phosphosulfate (APS) and diphosphate, the first enzymatic step in sulfur assimilation pathway. APS synthesis involves the formation of a high-energy phosphoric-sulfuric acid anhydride bond driven by GTP hydrolysis by CysN coupled to ATP hydrolysis by CysD. The protein is Sulfate adenylyltransferase subunit 2 of Mycobacterium sp. (strain KMS).